A 262-amino-acid chain; its full sequence is Global transcriptional regulator CodY (262 aa).

The segment at 1–159 (MAHLLEKTRK…ASTVVGIQLL (159 aa)) is GAF domain. The segment at residues 207–226 (ASVIADRIGITRSVIVNALR) is a DNA-binding region (H-T-H motif).

This sequence belongs to the CodY family.

It localises to the cytoplasm. Functionally, DNA-binding global transcriptional regulator which is involved in the adaptive response to starvation and acts by directly or indirectly controlling the expression of numerous genes in response to nutrient availability. During rapid exponential growth, CodY is highly active and represses genes whose products allow adaptation to nutrient depletion. In Streptococcus pneumoniae (strain ATCC BAA-255 / R6), this protein is Global transcriptional regulator CodY.